The sequence spans 262 residues: Thiazole synthase (262 aa).

Lysine 98 serves as the catalytic Schiff-base intermediate with DXP. Residues glycine 159, 186 to 187 (AG), and 208 to 209 (NT) contribute to the 1-deoxy-D-xylulose 5-phosphate site.

This sequence belongs to the ThiG family. Homotetramer. Forms heterodimers with either ThiH or ThiS.

The protein resides in the cytoplasm. The catalysed reaction is [ThiS sulfur-carrier protein]-C-terminal-Gly-aminoethanethioate + 2-iminoacetate + 1-deoxy-D-xylulose 5-phosphate = [ThiS sulfur-carrier protein]-C-terminal Gly-Gly + 2-[(2R,5Z)-2-carboxy-4-methylthiazol-5(2H)-ylidene]ethyl phosphate + 2 H2O + H(+). It participates in cofactor biosynthesis; thiamine diphosphate biosynthesis. Catalyzes the rearrangement of 1-deoxy-D-xylulose 5-phosphate (DXP) to produce the thiazole phosphate moiety of thiamine. Sulfur is provided by the thiocarboxylate moiety of the carrier protein ThiS. In vitro, sulfur can be provided by H(2)S. In Hahella chejuensis (strain KCTC 2396), this protein is Thiazole synthase.